The following is a 46-amino-acid chain: Endochitinase 3 (46 aa).

Residues 1 to 21 form a disordered region; the sequence is MTPQGNKPSSHDVITGRWTPS.

It belongs to the glycosyl hydrolase 19 family. Chitinase class I subfamily.

It carries out the reaction Random endo-hydrolysis of N-acetyl-beta-D-glucosaminide (1-&gt;4)-beta-linkages in chitin and chitodextrins.. Functionally, defense against chitin-containing fungal and bacterial pathogens. The protein is Endochitinase 3 of Arachis hypogaea (Peanut).